The following is a 572-amino-acid chain: Mitochondrial distribution and morphology protein 34 (572 aa).

The region spanning 1–195 is the SMP-LTD domain; that stretch reads MAFNFNWSPL…LPAIIHRLSL (195 aa). 4 disordered regions span residues 212-236, 321-426, 477-522, and 553-572; these read TASA…VDAL, VGSM…PDND, SATP…DNPT, and CGPF…AYGH. Residues 330–348 show a composition bias toward low complexity; that stretch reads SASMVSSQSRSSTPSHTFS. Residues 358–370 show a composition bias toward basic residues; sequence RHSKAHARKRKKR. The span at 371–381 shows a compositional bias: basic and acidic residues; the sequence is VVDLRRPKTTD. Polar residues-rich tracts occupy residues 387–400 and 500–511; these read SDES…SAPS and DSSAGSSRQLPS.

It belongs to the MDM34 family. As to quaternary structure, component of the ER-mitochondria encounter structure (ERMES) or MDM complex, composed of mmm1, mdm10, mdm12 and mdm34.

Its subcellular location is the mitochondrion outer membrane. Functionally, component of the ERMES/MDM complex, which serves as a molecular tether to connect the endoplasmic reticulum (ER) and mitochondria. Components of this complex are involved in the control of mitochondrial shape and protein biogenesis, and function in nonvesicular lipid trafficking between the ER and mitochondria. Mdm34 is required for the interaction of the ER-resident membrane protein mmm1 and the outer mitochondrial membrane-resident beta-barrel protein mdm10. This chain is Mitochondrial distribution and morphology protein 34, found in Aspergillus fumigatus (strain CBS 144.89 / FGSC A1163 / CEA10) (Neosartorya fumigata).